We begin with the raw amino-acid sequence, 828 residues long: Leucine--tRNA ligase (828 aa).

The 'HIGH' region signature appears at Pro-36–His-46. Positions Lys-595–Ser-599 match the 'KMSKS' region motif. Lys-598 contributes to the ATP binding site.

It belongs to the class-I aminoacyl-tRNA synthetase family.

It is found in the cytoplasm. The catalysed reaction is tRNA(Leu) + L-leucine + ATP = L-leucyl-tRNA(Leu) + AMP + diphosphate. The protein is Leucine--tRNA ligase of Rickettsia prowazekii (strain Madrid E).